A 346-amino-acid polypeptide reads, in one-letter code: Peripherin-2 (346 aa).

Over 1–24 the chain is Cytoplasmic; that stretch reads MALLKVKFDQKKRVKLAQGLWLMN. A helical transmembrane segment spans residues 25 to 43; sequence WLSVLAGIVLFSLGLFLKI. At 44-61 the chain is on the lumenal side; sequence ELRKRSDVMDNSESHFVP. Residues 62–80 traverse the membrane as a helical segment; it reads NSLIGVGVLSCVFNSLAGK. The Cytoplasmic portion of the chain corresponds to 81–99; that stretch reads ICYDALDPAKYAKWKPWLK. The chain crosses the membrane as a helical span at residues 100 to 123; the sequence is LYLAVCVFFNVILFLVALCCFLLR. Residues 124-264 lie on the Lumenal side of the membrane; that stretch reads GSLESTLAYG…LNYYSSLMNS (141 aa). N-linked (GlcNAc...) asparagine glycosylation occurs at asparagine 229. The helical transmembrane segment at 265 to 290 threads the bilayer; it reads MGVVTLLIWLFEVSITAGLRFLHTAL. At 291–346 the chain is on the cytoplasmic side; that stretch reads ESVSNPEDPECESEGWLLENSVSETWKAFLESFKKLGKSNQVEAEAADAGQAPEAG. The segment at 341–346 is interaction with MREG; it reads QAPEAG.

It belongs to the PRPH2/ROM1 family. As to quaternary structure, homodimer; disulfide-linked. Forms a homotetramer. Forms a heterotetramer with ROM1. Homotetramer and heterotetramer core complexes go on to form higher order complexes by formation of intermolecular disulfide bonds. Interacts with MREG. Interacts with STX3. Interacts with SNAP25. As to expression, retina (photoreceptor). In rim region of ROS (rod outer segment) disks.

The protein localises to the membrane. The protein resides in the cell projection. Its subcellular location is the cilium. It is found in the photoreceptor outer segment. It localises to the photoreceptor inner segment. Essential for retina photoreceptor outer segment disk morphogenesis, may also play a role with ROM1 in the maintenance of outer segment disk structure. Required for the maintenance of retinal outer nuclear layer thickness. Required for the correct development and organization of the photoreceptor inner segment. The polypeptide is Peripherin-2 (Prph2) (Rattus norvegicus (Rat)).